A 337-amino-acid polypeptide reads, in one-letter code: tRNA N6-adenosine threonylcarbamoyltransferase (337 aa).

Fe cation contacts are provided by His111 and His115. Substrate contacts are provided by residues 134–138 (LVSGG), Asp167, Gly180, and Asn272. Asp300 lines the Fe cation pocket.

The protein belongs to the KAE1 / TsaD family. The cofactor is Fe(2+).

Its subcellular location is the cytoplasm. The enzyme catalyses L-threonylcarbamoyladenylate + adenosine(37) in tRNA = N(6)-L-threonylcarbamoyladenosine(37) in tRNA + AMP + H(+). In terms of biological role, required for the formation of a threonylcarbamoyl group on adenosine at position 37 (t(6)A37) in tRNAs that read codons beginning with adenine. Is involved in the transfer of the threonylcarbamoyl moiety of threonylcarbamoyl-AMP (TC-AMP) to the N6 group of A37, together with TsaE and TsaB. TsaD likely plays a direct catalytic role in this reaction. This chain is tRNA N6-adenosine threonylcarbamoyltransferase, found in Shewanella woodyi (strain ATCC 51908 / MS32).